We begin with the raw amino-acid sequence, 469 residues long: Probable Xaa-Pro aminopeptidase AN0832 (469 aa).

Mn(2+)-binding residues include D260, D271, E398, and E437.

The protein belongs to the peptidase M24B family. Mn(2+) is required as a cofactor.

The catalysed reaction is Release of any N-terminal amino acid, including proline, that is linked to proline, even from a dipeptide or tripeptide.. Catalyzes the removal of a penultimate prolyl residue from the N-termini of peptides. This Emericella nidulans (strain FGSC A4 / ATCC 38163 / CBS 112.46 / NRRL 194 / M139) (Aspergillus nidulans) protein is Probable Xaa-Pro aminopeptidase AN0832.